Consider the following 139-residue polypeptide: D-ribose pyranase (139 aa).

Histidine 20 (proton donor) is an active-site residue. Residues aspartate 28, histidine 106, and tyrosine 128–asparagine 130 each bind substrate.

It belongs to the RbsD / FucU family. RbsD subfamily. In terms of assembly, homodecamer.

It localises to the cytoplasm. The catalysed reaction is beta-D-ribopyranose = beta-D-ribofuranose. It functions in the pathway carbohydrate metabolism; D-ribose degradation; D-ribose 5-phosphate from beta-D-ribopyranose: step 1/2. Functionally, catalyzes the interconversion of beta-pyran and beta-furan forms of D-ribose. The chain is D-ribose pyranase from Cronobacter sakazakii (strain ATCC BAA-894) (Enterobacter sakazakii).